An 85-amino-acid polypeptide reads, in one-letter code: Large ribosomal subunit protein bL27 (85 aa).

Positions 1–20 (MAHKKAGGSTRNGRDSEAKR) are disordered.

This sequence belongs to the bacterial ribosomal protein bL27 family.

This chain is Large ribosomal subunit protein bL27, found in Citrobacter koseri (strain ATCC BAA-895 / CDC 4225-83 / SGSC4696).